Reading from the N-terminus, the 688-residue chain is Elongation factor G (688 aa).

The tr-type G domain maps to 8–282; the sequence is EKFRNIGIMA…AVVDFMPSPL (275 aa). Residues 17–24, 81–85, and 135–138 each bind GTP; these read AHIDAGKT, DTPGH, and NKMD. A disordered region spans residues 282–305; that stretch reads LDIPPIKGTDPETGEETDRPADDN.

This sequence belongs to the TRAFAC class translation factor GTPase superfamily. Classic translation factor GTPase family. EF-G/EF-2 subfamily.

It is found in the cytoplasm. Catalyzes the GTP-dependent ribosomal translocation step during translation elongation. During this step, the ribosome changes from the pre-translocational (PRE) to the post-translocational (POST) state as the newly formed A-site-bound peptidyl-tRNA and P-site-bound deacylated tRNA move to the P and E sites, respectively. Catalyzes the coordinated movement of the two tRNA molecules, the mRNA and conformational changes in the ribosome. The sequence is that of Elongation factor G from Clostridium kluyveri (strain NBRC 12016).